A 164-amino-acid polypeptide reads, in one-letter code: UPF0304 protein YfbU (164 aa).

This sequence belongs to the UPF0304 family.

This chain is UPF0304 protein YfbU, found in Escherichia coli O127:H6 (strain E2348/69 / EPEC).